We begin with the raw amino-acid sequence, 411 residues long: Methylthioribose-1-phosphate isomerase (411 aa).

Serine 2 bears the N-acetylserine mark. Aspartate 280 (proton donor) is an active-site residue. Serine 351 carries the post-translational modification Phosphoserine.

The protein belongs to the eIF-2B alpha/beta/delta subunits family. MtnA subfamily. In terms of assembly, homodimer.

It is found in the cytoplasm. It localises to the nucleus. The catalysed reaction is 5-(methylsulfanyl)-alpha-D-ribose 1-phosphate = 5-(methylsulfanyl)-D-ribulose 1-phosphate. It functions in the pathway amino-acid biosynthesis; L-methionine biosynthesis via salvage pathway; L-methionine from S-methyl-5-thio-alpha-D-ribose 1-phosphate: step 1/6. Catalyzes the interconversion of methylthioribose-1-phosphate (MTR-1-P) into methylthioribulose-1-phosphate (MTRu-1-P). The chain is Methylthioribose-1-phosphate isomerase from Saccharomyces cerevisiae (strain JAY291) (Baker's yeast).